We begin with the raw amino-acid sequence, 134 residues long: Cytochrome b (134 aa).

Transmembrane regions (helical) follow at residues 33-53, 77-98, and 113-133; these read FGSL…FLAM, WLLR…YLHV, and WNVG…GYVL. The heme b site is built by H83 and H97.

This sequence belongs to the cytochrome b family. In terms of assembly, the cytochrome bc1 complex contains 11 subunits: 3 respiratory subunits (MT-CYB, CYC1 and UQCRFS1), 2 core proteins (UQCRC1 and UQCRC2) and 6 low-molecular weight proteins (UQCRH/QCR6, UQCRB/QCR7, UQCRQ/QCR8, UQCR10/QCR9, UQCR11/QCR10 and a cleavage product of UQCRFS1). This cytochrome bc1 complex then forms a dimer. Requires heme b as cofactor.

The protein localises to the mitochondrion inner membrane. In terms of biological role, component of the ubiquinol-cytochrome c reductase complex (complex III or cytochrome b-c1 complex) that is part of the mitochondrial respiratory chain. The b-c1 complex mediates electron transfer from ubiquinol to cytochrome c. Contributes to the generation of a proton gradient across the mitochondrial membrane that is then used for ATP synthesis. The protein is Cytochrome b (MT-CYB) of Chiroderma trinitatum (Little big-eyed bat).